The chain runs to 204 residues: MASMALRRLASRNLVSGGIFRPLSVSRSFNTNAQMGRVDHDHELDDRSNRAPISRRGDFPASFFSDVFDPFRATRSVGQLMNLMDQLMENPFMAASRGSGRAMRRGWDVREDEEALELKVDMPGLAKEDVKVSVEDNTLIIKSEAEKETEEEEQRRRYSSRIELTPNLYKIDGIKAEMKNGVLKVTVPKIKEEEKKDVFQVMVD.

Residues 34–55 (QMGRVDHDHELDDRSNRAPISR) form a disordered region. A compositionally biased stretch (basic and acidic residues) spans 37 to 49 (RVDHDHELDDRSN). The sHSP domain occupies 98–204 (GSGRAMRRGW…KKDVFQVMVD (107 aa)).

Belongs to the small heat shock protein (HSP20) family.

The protein resides in the plastid. The protein localises to the chloroplast stroma. The sequence is that of Small heat shock protein, chloroplastic (HSP23) from Oxybasis rubra (Red goosefoot).